We begin with the raw amino-acid sequence, 540 residues long: Gamma-cadinene synthase (540 aa).

Mg(2+) is bound by residues D292, D296, D436, S440, and E444. Positions D292–D296 match the DDXXD motif motif.

This sequence belongs to the terpene synthase family. It depends on Mg(2+) as a cofactor. Mn(2+) serves as cofactor.

The catalysed reaction is (2E,6E)-farnesyl diphosphate = (+)-gamma-cadinene + diphosphate. Its pathway is secondary metabolite biosynthesis; terpenoid biosynthesis. Functionally, sesquiterpene synthase that catalyzes the cyclization of trans,trans-farnesyl diphosphate (FPP) to gamma cadinene. In Ocimum basilicum (Sweet basil), this protein is Gamma-cadinene synthase (CDS).